Reading from the N-terminus, the 310-residue chain is uncharacterized protein (310 aa).

5 helical membrane-spanning segments follow: residues 10–30 (AVLS…AYAI), 44–64 (TVNL…ATPA), 78–98 (FSSG…GYSA), 113–133 (LGIA…WILW), and 161–181 (VVVA…PLIA). The span at 285 to 297 (PLEDPKSWQHPDE) shows a compositional bias: basic and acidic residues. Positions 285 to 310 (PLEDPKSWQHPDEFPPSAPLNRDKPN) are disordered.

The protein belongs to the cation diffusion facilitator (CDF) transporter (TC 2.A.4) family.

The protein localises to the cell membrane. This is an uncharacterized protein from Synechocystis sp. (strain ATCC 27184 / PCC 6803 / Kazusa).